We begin with the raw amino-acid sequence, 633 residues long: Guanylate-binding protein 6 (633 aa).

The tract at residues 1-310 (MESGPKMLAP…EAINSGAVPC (310 aa)) is GTPase domain (Globular). The 243-residue stretch at 35 to 277 (SQPVVVVAIV…FCSYIFTHAR (243 aa)) folds into the GB1/RHD3-type G domain. GTP is bound by residues 45-52 (GLYRTGKS), 67-69 (LGS), and 97-101 (DTEGL).

The protein belongs to the TRAFAC class dynamin-like GTPase superfamily. GB1/RHD3 GTPase family. GB1 subfamily. In terms of processing, (Microbial infection) Ubiquitinated by S.flexneri IpaH9.8, leading to its degradation by the proteasome, thereby preventing its ability to promote host defense against bacterial infection.

It localises to the cytoplasmic vesicle. It catalyses the reaction GTP + H2O = GDP + phosphate + H(+). Its function is as follows. Interferon (IFN)-inducible GTPase that plays important roles in innate immunity against a diverse range of bacterial, viral and protozoan pathogens, such as bacterial pathogens Listeria monocytogenes and Mycobacterium bovis BCG as well as the protozoan pathogen Toxoplasma gondii. Confers protection to several pathogens, including the bacterial pathogens Listeria monocytogenes and Mycobacterium bovis BCG as well as the protozoan pathogen Toxoplasma gondii. The sequence is that of Guanylate-binding protein 6 (GBP6) from Homo sapiens (Human).